Here is a 142-residue protein sequence, read N- to C-terminus: Midkine-A (142 aa).

Residues 1–20 (MELRAFCVILLITVLAVSSQ) form the signal peptide. Disulfide bonds link cysteine 36–cysteine 60, cysteine 44–cysteine 69, cysteine 51–cysteine 73, cysteine 83–cysteine 115, and cysteine 93–cysteine 125.

Belongs to the pleiotrophin family. As to expression, expression at the mid-gastrula stage begins in the neural anlage, and becomes increasingly prominent in the central nervous system and head mesenchyme during neurula stages. Although the mRNA is localized to the developing central nervous system (CNS), the protein is deposited at the neuromuscular junction (NMJ). In the tailbud stage embryo, expressed in the head and tail regions as well as in the CNS. In adults, expression is highest in the brain, eye and bone, with lower expression in the heart and lung. Not expressed in the ovary.

It is found in the secreted. In terms of biological role, secreted protein that functions as a cytokine and growth factor and mediates its signal through cell-surface proteoglycan and non-proteoglycan receptors. Binds cell-surface proteoglycan receptors via their chondroitin sulfate (CS) groups. Thereby regulates many processes like inflammatory response, cell proliferation, cell adhesion, cell growth, cell survival, tissue regeneration, cell differentiation and cell migration. Inhibits mesoderm formation and promotes neural formation during development. Plays a role in development of the neuromuscular junction (NMJ). Has antibacterial activity against both Gram-positive and Gram-negative bacteria. The polypeptide is Midkine-A (mdk-a) (Xenopus laevis (African clawed frog)).